A 146-amino-acid polypeptide reads, in one-letter code: Large ribosomal subunit protein uL15 (146 aa).

The tract at residues 1 to 56 (MGLRLNELSPGVGAKKTAQRRGRGIGSGLGKTGGRGVKGQKSRSGSSVRSGFEGGQ) is disordered. Positions 24–37 (GIGSGLGKTGGRGV) are enriched in gly residues.

It belongs to the universal ribosomal protein uL15 family. Part of the 50S ribosomal subunit.

Its function is as follows. Binds to the 23S rRNA. The sequence is that of Large ribosomal subunit protein uL15 from Psychrobacter arcticus (strain DSM 17307 / VKM B-2377 / 273-4).